The sequence spans 251 residues: Eukaryotic translation initiation factor 3 subunit K (251 aa).

The PCI domain maps to 46–224 (FDCYANLALL…VKVPTNKENE (179 aa)).

It belongs to the eIF-3 subunit K family. Component of the eukaryotic translation initiation factor 3 (eIF-3) complex.

The protein resides in the cytoplasm. Functionally, component of the eukaryotic translation initiation factor 3 (eIF-3) complex, which is involved in protein synthesis of a specialized repertoire of mRNAs and, together with other initiation factors, stimulates binding of mRNA and methionyl-tRNAi to the 40S ribosome. The eIF-3 complex specifically targets and initiates translation of a subset of mRNAs involved in cell proliferation. This Aspergillus oryzae (strain ATCC 42149 / RIB 40) (Yellow koji mold) protein is Eukaryotic translation initiation factor 3 subunit K.